Here is a 303-residue protein sequence, read N- to C-terminus: Probable cell division protein WhiA (303 aa).

The segment at residues 272–303 (SIQQVADALEFPITKSGVNHRLRKINKIADDL) is a DNA-binding region (H-T-H motif).

The protein belongs to the WhiA family.

In terms of biological role, involved in cell division and chromosome segregation. The chain is Probable cell division protein WhiA from Streptococcus pyogenes serotype M3 (strain ATCC BAA-595 / MGAS315).